Consider the following 119-residue polypeptide: Holo-[acyl-carrier-protein] synthase (119 aa).

Mg(2+)-binding residues include Asp-8 and Glu-58.

This sequence belongs to the P-Pant transferase superfamily. AcpS family. The cofactor is Mg(2+).

It localises to the cytoplasm. The catalysed reaction is apo-[ACP] + CoA = holo-[ACP] + adenosine 3',5'-bisphosphate + H(+). Its function is as follows. Transfers the 4'-phosphopantetheine moiety from coenzyme A to a Ser of acyl-carrier-protein. This is Holo-[acyl-carrier-protein] synthase from Lactobacillus johnsonii (strain CNCM I-12250 / La1 / NCC 533).